The sequence spans 131 residues: MESKAQEIILSCEINSIERGSLKNLSIIHMSCNDFNISFDIIDSINIFSQKEKVKAFISKNRLSYTNDDFCGHGYIVTELKDSSSNNGNRYITIISLFGLLVKIISNKESFLKIHQLNVMDHIYFCVKKNT.

The protein belongs to the archaeal Rpo8 RNA polymerase subunit family. As to quaternary structure, part of the 13-subunit RNA polymerase complex. Interacts with Rpo1N on the periphery of the clamp head.

It is found in the cytoplasm. It catalyses the reaction RNA(n) + a ribonucleoside 5'-triphosphate = RNA(n+1) + diphosphate. DNA-dependent RNA polymerase (RNAP) catalyzes the transcription of DNA into RNA using the four ribonucleoside triphosphates as substrates. This Saccharolobus shibatae (strain ATCC 51178 / DSM 5389 / JCM 8931 / NBRC 15437 / B12) (Sulfolobus shibatae) protein is DNA-directed RNA polymerase subunit Rpo8.